Here is a 621-residue protein sequence, read N- to C-terminus: Putative DNA 3'-5' helicase Rad25 (621 aa).

The 150-residue stretch at 268-417 (VERFTEQGSG…EIFTLIGPPI (150 aa)) folds into the Helicase ATP-binding domain. 281–288 (GPPGSGKT) lines the ATP pocket. The DEAH box signature appears at 371–374 (DEVH). The tract at residues 441 to 465 (PWGDETEQSEYSSTSGHDRRQAAAS) is disordered. The Helicase C-terminal domain maps to 469 to 621 (KIDEIRYALA…EAVEPPAKTE (153 aa)).

The protein belongs to the helicase family. RAD25/XPB subfamily.

It carries out the reaction Couples ATP hydrolysis with the unwinding of duplex DNA by translocating in the 3'-5' direction.. It catalyses the reaction ATP + H2O = ADP + phosphate + H(+). The protein is Putative DNA 3'-5' helicase Rad25 of Haloarcula marismortui (strain ATCC 43049 / DSM 3752 / JCM 8966 / VKM B-1809) (Halobacterium marismortui).